The chain runs to 255 residues: Phosphate import ATP-binding protein PstB (255 aa).

In terms of domain architecture, ABC transporter spans 9–250 (MYAQGLQFYY…PRNKQTEDYI (242 aa)). Position 41 to 48 (41 to 48 (GPSGCGKS)) interacts with ATP.

It belongs to the ABC transporter superfamily. Phosphate importer (TC 3.A.1.7) family. In terms of assembly, the complex is composed of two ATP-binding proteins (PstB), two transmembrane proteins (PstC and PstA) and a solute-binding protein (PstS).

Its subcellular location is the cell inner membrane. It carries out the reaction phosphate(out) + ATP + H2O = ADP + 2 phosphate(in) + H(+). In terms of biological role, part of the ABC transporter complex PstSACB involved in phosphate import. Responsible for energy coupling to the transport system. This chain is Phosphate import ATP-binding protein PstB, found in Nitratidesulfovibrio vulgaris (strain ATCC 29579 / DSM 644 / CCUG 34227 / NCIMB 8303 / VKM B-1760 / Hildenborough) (Desulfovibrio vulgaris).